Consider the following 890-residue polypeptide: Translation initiation factor IF-2 (890 aa).

The interval 45 to 304 (LIDHLNQKNS…LQQGFQKPAQ (260 aa)) is disordered. Residues 67–81 (STLNIPGTGGKSKSV) show a composition bias toward polar residues. Over residues 92 to 217 (VKRDPQEAER…RMAEENKWID (126 aa)) the composition is skewed to basic and acidic residues. Basic residues predominate over residues 252 to 266 (GRGRNAKAARPKKGN). Positions 267-280 (KHAESKADREEARA) are enriched in basic and acidic residues. Residues 389 to 558 (PRAPVVTIMG…LLQAEVLELK (170 aa)) enclose the tr-type G domain. The tract at residues 398-405 (GHVDHGKT) is G1. 398–405 (GHVDHGKT) lines the GTP pocket. The G2 stretch occupies residues 423–427 (GITQH). The G3 stretch occupies residues 444–447 (DTPG). GTP-binding positions include 444-448 (DTPGH) and 498-501 (NKID). Positions 498–501 (NKID) are G4. Residues 534–536 (SAK) form a G5 region. At K808 the chain carries N6-acetyllysine.

This sequence belongs to the TRAFAC class translation factor GTPase superfamily. Classic translation factor GTPase family. IF-2 subfamily.

It localises to the cytoplasm. Its function is as follows. One of the essential components for the initiation of protein synthesis. Protects formylmethionyl-tRNA from spontaneous hydrolysis and promotes its binding to the 30S ribosomal subunits. Also involved in the hydrolysis of GTP during the formation of the 70S ribosomal complex. This Escherichia coli O81 (strain ED1a) protein is Translation initiation factor IF-2.